The following is a 245-amino-acid chain: Orotidine 5'-phosphate decarboxylase (245 aa).

Residues Asp-22, Lys-44, 71-80 (DLKFHDIPNT), Thr-131, Arg-192, Gln-201, Gly-221, and Arg-222 each bind substrate. The Proton donor role is filled by Lys-73.

Belongs to the OMP decarboxylase family. Type 1 subfamily. Homodimer.

It catalyses the reaction orotidine 5'-phosphate + H(+) = UMP + CO2. It functions in the pathway pyrimidine metabolism; UMP biosynthesis via de novo pathway; UMP from orotate: step 2/2. In terms of biological role, catalyzes the decarboxylation of orotidine 5'-monophosphate (OMP) to uridine 5'-monophosphate (UMP). This Shigella boydii serotype 18 (strain CDC 3083-94 / BS512) protein is Orotidine 5'-phosphate decarboxylase.